We begin with the raw amino-acid sequence, 133 residues long: Small ribosomal subunit protein uS8 (133 aa).

Belongs to the universal ribosomal protein uS8 family. In terms of assembly, part of the 30S ribosomal subunit. Contacts proteins S5 and S12.

Functionally, one of the primary rRNA binding proteins, it binds directly to 16S rRNA central domain where it helps coordinate assembly of the platform of the 30S subunit. The sequence is that of Small ribosomal subunit protein uS8 from Anaplasma phagocytophilum (strain HZ).